The chain runs to 274 residues: Putative phosphoenolpyruvate synthase regulatory protein (274 aa).

An ADP-binding site is contributed by 154 to 161 (GVSRCGKT).

It belongs to the pyruvate, phosphate/water dikinase regulatory protein family. PSRP subfamily.

The catalysed reaction is [pyruvate, water dikinase] + ADP = [pyruvate, water dikinase]-phosphate + AMP + H(+). It catalyses the reaction [pyruvate, water dikinase]-phosphate + phosphate + H(+) = [pyruvate, water dikinase] + diphosphate. Its function is as follows. Bifunctional serine/threonine kinase and phosphorylase involved in the regulation of the phosphoenolpyruvate synthase (PEPS) by catalyzing its phosphorylation/dephosphorylation. The chain is Putative phosphoenolpyruvate synthase regulatory protein from Pseudomonas aeruginosa (strain LESB58).